The following is a 359-amino-acid chain: MDMESKKPYLMVTIIQVIYTIMFLISKAVFNGGMNTFVFVFYRQAFATIFLAPLAFFFERKSAPPLSFVTFIKIFMLSLFGVTLSLDLNGIALSYTSATLAAATTASLPAITFFLALLFGMERLKVKSIQGTAKLVGITVCMGGVIILAIYKGPLLKLPLCPHFYHGQEHPHRNNPGHVSGGSTSWLKGCVLMITSNILWGLWLVLQGRVLKVYPSKLYFTTLHCLLSSIQSFVIAIALERDISAWKLGWNLRLVAVIYCGFIVTGVAYYLQSWVIEKRGPVFLSMFTPLSLLFTLLSSAILLCEIISLGSIVGGLLLIIGLYCVLWGKSREEKNSGDDKIDLQKENDVVCNEVKVVIS.

10 helical membrane-spanning segments follow: residues 10–30 (LMVT…KAVF), 37–57 (FVFV…LAFF), 66–86 (LSFV…TLSL), 100–120 (LAAA…LLFG), 135–155 (LVGI…KGPL), 186–206 (WLKG…WLVL), 218–238 (LYFT…IAIA), 256–276 (AVIY…SWVI), 282–302 (VFLS…SAIL), and 306–326 (IISL…YCVL). 2 consecutive EamA domains span residues 18 to 136 (IYTI…AKLV) and 198 to 326 (ILWG…YCVL).

The protein belongs to the drug/metabolite transporter (DMT) superfamily. Plant drug/metabolite exporter (P-DME) (TC 2.A.7.4) family.

The protein resides in the membrane. The protein is WAT1-related protein At5g64700 of Arabidopsis thaliana (Mouse-ear cress).